Here is a 277-residue protein sequence, read N- to C-terminus: MKQLYGVIGNPIGHSLSPVMHNNAFEHLNMDAHYHAFLVEEEVLGEAVRGLKALGISGFNVTTPHKVAIMEYLDEIDPLARKIGAVNTVVHKNGRLIGYNTDGIGFVRALQSISHEPLQGKRILLLGAGGASRAIYFSLADVGVKEIDVANRTVDKAKELIAARTADVNSVALSLEKATEEQGNYDIIIQTTTIGMHPHVEHTPLQICSLKKGTIVSDIIYNPFETKILCEAKEQGAIIQNGIDMFVYQGALAFEMWTGSVPNIGRMKQLVIEKLGG.

Residues serine 15 to serine 17 and threonine 62 each bind shikimate. The active-site Proton acceptor is the lysine 66. Shikimate is bound by residues asparagine 87 and aspartate 102. NADP(+)-binding positions include glycine 127–alanine 131, asparagine 151–lysine 156, and isoleucine 219. Tyrosine 221 is a shikimate binding site. Position 242 (glycine 242) interacts with NADP(+).

This sequence belongs to the shikimate dehydrogenase family. In terms of assembly, homodimer.

The catalysed reaction is shikimate + NADP(+) = 3-dehydroshikimate + NADPH + H(+). Its pathway is metabolic intermediate biosynthesis; chorismate biosynthesis; chorismate from D-erythrose 4-phosphate and phosphoenolpyruvate: step 4/7. Involved in the biosynthesis of the chorismate, which leads to the biosynthesis of aromatic amino acids. Catalyzes the reversible NADPH linked reduction of 3-dehydroshikimate (DHSA) to yield shikimate (SA). The polypeptide is Shikimate dehydrogenase (NADP(+)) (Bacillus cereus (strain G9842)).